Here is a 456-residue protein sequence, read N- to C-terminus: Chitobiosyldiphosphodolichol beta-mannosyltransferase (456 aa).

At 1 to 22 (MGEIIKYKGFDHVWQYSGPWLY) the chain is on the lumenal side. The helical transmembrane segment at 23 to 43 (CLIGIYISLPVLAYHILPWIF) threads the bilayer. The Cytoplasmic portion of the chain corresponds to 44–103 (HKNRSNKRKTISIFVLGDLGHSPRMCYHASSFSKLDYYVNLCGYVETEPSHQIVDDVNID). The helical intramembrane region spans 104-124 (IIPIEAIKNTNNLPYIMFAIL). The Cytoplasmic portion of the chain corresponds to 125–456 (KVVRQCGKIW…TFSSIFENKS (332 aa)).

It belongs to the glycosyltransferase group 1 family.

It localises to the endoplasmic reticulum membrane. It carries out the reaction an N,N'-diacetylchitobiosyl-diphospho-di-trans,poly-cis-dolichol + GDP-alpha-D-mannose = a beta-D-Man-(1-&gt;4)-beta-D-GlcNAc-(1-&gt;4)-alpha-D-GlcNAc-diphospho-di-trans,poly-cis-dolichol + GDP + H(+). It functions in the pathway protein modification; protein glycosylation. In terms of biological role, participates in the formation of the lipid-linked precursor oligosaccharide for N-glycosylation. Involved in assembling the dolichol-pyrophosphate-GlcNAc(2)-Man(5) intermediate on the cytoplasmic surface of the ER. The sequence is that of Chitobiosyldiphosphodolichol beta-mannosyltransferase (ALG1) from Candida albicans (strain SC5314 / ATCC MYA-2876) (Yeast).